The primary structure comprises 289 residues: MPKASHHDLRFAFRELLASGSCYHTASVFDPMSARIAADLGFEVGILGGSVASLQVLAAPDFALITLSEFVEQATRIGRVAQLPVLADADHGYGNALNVMRTVIELERAGVAGLTIEDTLLPAQFGRKSTDLISVEEGVGKIRAALEARVDSALAIIARTNAGVLTTEEIIVRTQSYQKAGADGICMVGVKDFDQLEQIAEHLSVPLMLVTYANPNLRDDERLARLGVRVVVDGHAAYFAAIKATYDCLRLQRGLQHKSDSLNATELSHTYTQPEDYIRWAKEYMSVEE.

S50 is a binding site for substrate. D88 is a Mg(2+) binding site. R159 and H235 together coordinate substrate.

It belongs to the isocitrate lyase/PEP mutase superfamily. Oxaloacetate decarboxylase family. As to quaternary structure, homotetramer; dimer of dimers. The cofactor is Mg(2+).

It carries out the reaction oxaloacetate + H(+) = pyruvate + CO2. Functionally, catalyzes the decarboxylation of oxaloacetate into pyruvate. Seems to play a role in maintaining cellular concentrations of bicarbonate and pyruvate. This chain is Oxaloacetate decarboxylase, found in Pseudomonas entomophila (strain L48).